The chain runs to 61 residues: Conotoxin LiC32 (61 aa).

Residues 1–22 form the signal peptide; the sequence is MRCVPVFIILLLLSPSAPSVDA. Residues 23–44 constitute a propeptide that is removed on maturation; it reads HPKTKDDVPLASFHDDAKRTLQ. Residue Cys60 is modified to Cysteine amide.

This sequence belongs to the conotoxin T superfamily. Post-translationally, contains 2 disulfide bonds that can be either 'C1-C3, C2-C4' or 'C1-C4, C2-C3', since these disulfide connectivities have been observed for conotoxins with cysteine framework V (for examples, see AC P0DQQ7 and AC P81755). Expressed by the venom duct.

The protein resides in the secreted. Its function is as follows. Has the ability to interact with the G-protein coupled somatostatin type 3 receptor (SSTR3). The ability was measured in competition binding experiments and the constant of inhibition (Ki) has been evaluated to be 3.5 uM. This Conus lividus (Livid cone) protein is Conotoxin LiC32.